The chain runs to 390 residues: Protein STRICTOSIDINE SYNTHASE-LIKE 3 (390 aa).

An N-terminal signal peptide occupies residues 1–25 (MAMSILAKIFLVFAIYCAIDPFSHS). N-linked (GlcNAc...) asparagine glycans are attached at residues Asn95 and Asn108.

It belongs to the strictosidine synthase family.

The protein resides in the vacuole. The sequence is that of Protein STRICTOSIDINE SYNTHASE-LIKE 3 from Arabidopsis thaliana (Mouse-ear cress).